Consider the following 139-residue polypeptide: MEAAGGEQRELLIQRLRAAVHYTTGCLCQDVAEDKGVLFSKQTVAAISEITFRQCENFARDLEMFARHAKRSTITSEDVKLLARRSNSLLKYITQKSDELASSNMEQKEKKKKKSSAAKGRKTEENETPVTESEDSNMA.

A disordered region spans residues 99–139; the sequence is ELASSNMEQKEKKKKKSSAAKGRKTEENETPVTESEDSNMA. Residues 110–120 are compositionally biased toward basic residues; that stretch reads KKKKKSSAAKG.

The protein belongs to the TAF9 family. CENP-S/MHF1 subfamily. As to quaternary structure, heterodimer with CENPX, sometimes called MHF; this interaction stabilizes both partners. MHF heterodimers can assemble to form tetrameric structures. MHF also coassemble with CENPT-CENPW heterodimers at centromeres to form the tetrameric CENP-T-W-S-X complex. Forms a discrete complex with FANCM and CENPX, called FANCM-MHF; this interaction, probably mediated by direct binding between CENPS and FANCM, leads to synergistic activation of double-stranded DNA binding and strongly stimulates FANCM-mediated DNA remodeling. Recruited by FANCM to the Fanconi anemia (FA) core complex, which consists of CENPS, CENPX, FANCA, FANCB, FANCC, FANCE, FANCF, FANCG, FANCL, FANCM, FAAP24 and FAAP100. The FA core complex associates with Bloom syndrome (BLM) complex, which consists of at least BLM, DNA topoisomerase 3-alpha (TOP3A), RMI1/BLAP75, RPA1/RPA70 and RPA2/RPA32. The super complex between FA and BLM is called BRAFT. Component of the CENPA-CAD complex, composed of CENPI, CENPK, CENPL, CENPO, CENPP, CENPQ, CENPR and CENPS. The CENPA-CAD complex is probably recruited on centromeres by the CENPA-NAC complex, at least composed of CENPA, CENPC, CENPH, CENPM, CENPN, CENPT and CENPU.

The protein resides in the nucleus. Its subcellular location is the chromosome. The protein localises to the centromere. It is found in the kinetochore. DNA-binding component of the Fanconi anemia (FA) core complex. Required for the normal activation of the FA pathway, leading to monoubiquitination of the FANCI-FANCD2 complex in response to DNA damage, cellular resistance to DNA cross-linking drugs, and prevention of chromosomal breakage. In complex with CENPX (MHF heterodimer), crucial cofactor for FANCM in both binding and ATP-dependent remodeling of DNA. Stabilizes FANCM. In complex with CENPX and FANCM (but not other FANC proteins), rapidly recruited to blocked forks and promotes gene conversion at blocked replication forks. In complex with CENPT, CENPW and CENPX (CENP-T-W-S-X heterotetramer), involved in the formation of a functional kinetochore outer plate, which is essential for kinetochore-microtubule attachment and faithful mitotic progression. As a component of MHF and CENP-T-W-S-X complexes, binds DNA and bends it to form a nucleosome-like structure. DNA-binding function is fulfilled in the presence of CENPX, with the following preference for DNA substates: Holliday junction &gt; double-stranded &gt; splay arm &gt; single-stranded. Does not bind DNA on its own. The protein is Centromere protein S (CENPS) of Gallus gallus (Chicken).